The primary structure comprises 254 residues: Ribosomal RNA small subunit methyltransferase A (254 aa).

S-adenosyl-L-methionine-binding residues include Asn-12, Leu-14, Gly-38, Glu-59, Asp-83, and Asn-100.

This sequence belongs to the class I-like SAM-binding methyltransferase superfamily. rRNA adenine N(6)-methyltransferase family. RsmA subfamily.

It localises to the cytoplasm. It carries out the reaction adenosine(1518)/adenosine(1519) in 16S rRNA + 4 S-adenosyl-L-methionine = N(6)-dimethyladenosine(1518)/N(6)-dimethyladenosine(1519) in 16S rRNA + 4 S-adenosyl-L-homocysteine + 4 H(+). Functionally, specifically dimethylates two adjacent adenosines (A1518 and A1519) in the loop of a conserved hairpin near the 3'-end of 16S rRNA in the 30S particle. May play a critical role in biogenesis of 30S subunits. This chain is Ribosomal RNA small subunit methyltransferase A, found in Mycoplasma mobile (strain ATCC 43663 / 163K / NCTC 11711) (Mesomycoplasma mobile).